A 493-amino-acid chain; its full sequence is tRNA (guanine-N(7)-)-methyltransferase non-catalytic subunit trm82 (493 aa).

A compositionally biased stretch (polar residues) spans S46–E66. The tract at residues S46–V96 is disordered. WD repeat units lie at residues S99 to Q139, G237 to C287, and G289 to P331.

The protein belongs to the WD repeat TRM82 family. Forms a heterodimer with the catalytic subunit trm8.

The protein localises to the nucleus. The protein operates within tRNA modification; N(7)-methylguanine-tRNA biosynthesis. In terms of biological role, required for the formation of N(7)-methylguanine at position 46 (m7G46) in tRNA. In the complex, it is required to stabilize and induce conformational changes of the catalytic subunit. The chain is tRNA (guanine-N(7)-)-methyltransferase non-catalytic subunit trm82 (trm82) from Aspergillus oryzae (strain ATCC 42149 / RIB 40) (Yellow koji mold).